The primary structure comprises 234 residues: LexA repressor (234 aa).

The H-T-H motif DNA-binding region spans 26–46 (FEEMKEALDLKSKSGVHRLIS). The segment at 73-100 (AVGKAAPVSQREAANTNSALPPLRAAPK) is disordered. Residues 91-100 (ALPPLRAAPK) show a composition bias toward low complexity. Active-site for autocatalytic cleavage activity residues include S154 and K192.

The protein belongs to the peptidase S24 family. As to quaternary structure, homodimer.

It catalyses the reaction Hydrolysis of Ala-|-Gly bond in repressor LexA.. Functionally, represses a number of genes involved in the response to DNA damage (SOS response), including recA and lexA. In the presence of single-stranded DNA, RecA interacts with LexA causing an autocatalytic cleavage which disrupts the DNA-binding part of LexA, leading to derepression of the SOS regulon and eventually DNA repair. The sequence is that of LexA repressor from Novosphingobium aromaticivorans (strain ATCC 700278 / DSM 12444 / CCUG 56034 / CIP 105152 / NBRC 16084 / F199).